The following is a 472-amino-acid chain: Coronin-6 (472 aa).

WD repeat units lie at residues 23–64 (QAYE…VLPL), 72–111 (KNYP…VWQI), 122–161 (EPII…IWNV), 165–204 (EVLL…IIDP), 210–251 (VAEQ…LWDP), and 256–296 (EPVA…YFEI). A disordered region spans residues 407 to 433 (KRNILDVRPPSGPRRSQSASDAPLSQQ). Polar residues predominate over residues 420–433 (RRSQSASDAPLSQQ). A coiled-coil region spans residues 430 to 464 (LSQQHTLETLLEEIKALRERVQAQEQRITALENML).

This chain is Coronin-6 (CORO6), found in Homo sapiens (Human).